The sequence spans 854 residues: MALRLVADFDLGKDVLPWLRAQRAVSEASGAGSGGADVLENDYESLHVLNVERNGNIIYTYKDDKGNVVFGLYDCQTRQNELLYTFEKDLQVFSCSVNSERTLLAASLVQSTKEGKRNELQPGSKCLTLLVEIHPVNNVKVLKAVDSYIWVQFLYPHIESHPLPENHLLLISEEKYIEQFRIHVAQEDGNRVVIKNSGHLPRDRIAEDFVWAQWDMSEQRLYYIDLKKSRSILKCIQFYADESYNLMFEVPLDISLSNSGFKLVNFGCDYHQYRDKFSKHLTLCVFTNHTGSLCVCYSPKCASWGQITYSVFYIHKGHSKTFTTSLENVGSHMTKGITFLNLDYYVAVYLPGHFFHLLNVQHPDLICHNLFLTGNNEMIDMLPHCPLQSLSGSLVLDCCSGKLYRALLSQSSLLQLLQNTCLDCEKMAALHCALYCGQGAQFLEAQIIQWISENVSACHSFDLIQEFIIASSYWSVYSETSNMDKLLPHSSVLTWNTEIPGITLVTEDIALPLMKVLSFKGYWEKLNSNLEYVKYAKPHFHYNNSVVRREWHNLISEEKTGKRRSAAYVRNILDNAVKVISNLEARNLGPRLTPLLQEEDSHQRLLMGLMVSELKDHFLRHLQGVEKKKIEQMVLDYISKLLDLICHIVETNWRKHNLHSWVLHFNSRGSAAEFAVFHIMTRILEATNSLFLPLPPGFHTLHTILGVQCLPLHNLLHCIDSGVLLLTETAVIRLMKDLDNTEKNEKLKFSIIVRLPPLIGQKICRLWDHPMSSNIISRNHVTRLLQNYKKQPRNSMINKSSFSVEFLPLNYFIEILTDIESSNQALYPFEGHDNVDAEFVEEAALKHTAMLLGL.

It belongs to the GSAP family. In terms of assembly, interacts with APP; specifically interacts with the CTF-alpha product of APP. Interacts with the gamma-secretase complex. In terms of processing, the protein is first synthesized as a holoprotein form of 98 kDa and rapidly processed into the gamma-secretase-activating protein 16 kDa C-terminal form, which constitutes the predominant form. Widely expressed.

The protein localises to the golgi apparatus. The protein resides in the trans-Golgi network. Its function is as follows. Regulator of gamma-secretase activity, which specifically activates the production of amyloid-beta protein (amyloid-beta protein 40 and amyloid-beta protein 42), without affecting the cleavage of other gamma-secretase targets such has Notch. The gamma-secretase complex is an endoprotease complex that catalyzes the intramembrane cleavage of integral membrane proteins such as Notch receptors and APP (amyloid-beta precursor protein). Specifically promotes the gamma-cleavage of APP CTF-alpha (also named APP-CTF) by the gamma-secretase complex to generate amyloid-beta, while it reduces the epsilon-cleavage of APP CTF-alpha, leading to a low production of AICD. This is Gamma-secretase-activating protein (GSAP) from Homo sapiens (Human).